The chain runs to 428 residues: Histidine--tRNA ligase (428 aa).

The protein belongs to the class-II aminoacyl-tRNA synthetase family. In terms of assembly, homodimer.

It is found in the cytoplasm. The enzyme catalyses tRNA(His) + L-histidine + ATP = L-histidyl-tRNA(His) + AMP + diphosphate + H(+). The polypeptide is Histidine--tRNA ligase (Mesomycoplasma hyopneumoniae (strain J / ATCC 25934 / NCTC 10110) (Mycoplasma hyopneumoniae)).